Consider the following 262-residue polypeptide: Type III pantothenate kinase (262 aa).

6–13 (DVGNTNAV) contributes to the ATP binding site. Residues Tyr100 and 107–110 (GADR) each bind substrate. Asp109 (proton acceptor) is an active-site residue. Asp129 contributes to the K(+) binding site. Thr132 serves as a coordination point for ATP. A substrate-binding site is contributed by Thr184.

Belongs to the type III pantothenate kinase family. As to quaternary structure, homodimer. The cofactor is NH4(+). It depends on K(+) as a cofactor.

The protein resides in the cytoplasm. It catalyses the reaction (R)-pantothenate + ATP = (R)-4'-phosphopantothenate + ADP + H(+). It functions in the pathway cofactor biosynthesis; coenzyme A biosynthesis; CoA from (R)-pantothenate: step 1/5. Catalyzes the phosphorylation of pantothenate (Pan), the first step in CoA biosynthesis. The polypeptide is Type III pantothenate kinase (Bacillus cereus (strain G9842)).